The chain runs to 338 residues: Ketol-acid reductoisomerase (NADP(+)) (338 aa).

In terms of domain architecture, KARI N-terminal Rossmann spans M1 to T181. NADP(+) is bound by residues Y24–Q27, R47, S50, T52, and D82–Q85. H107 is an active-site residue. G133 contacts NADP(+). Positions T182–I327 constitute a KARI C-terminal knotted domain. D190, E194, E226, and E230 together coordinate Mg(2+). S251 provides a ligand contact to substrate.

The protein belongs to the ketol-acid reductoisomerase family. It depends on Mg(2+) as a cofactor.

The enzyme catalyses (2R)-2,3-dihydroxy-3-methylbutanoate + NADP(+) = (2S)-2-acetolactate + NADPH + H(+). The catalysed reaction is (2R,3R)-2,3-dihydroxy-3-methylpentanoate + NADP(+) = (S)-2-ethyl-2-hydroxy-3-oxobutanoate + NADPH + H(+). It participates in amino-acid biosynthesis; L-isoleucine biosynthesis; L-isoleucine from 2-oxobutanoate: step 2/4. Its pathway is amino-acid biosynthesis; L-valine biosynthesis; L-valine from pyruvate: step 2/4. Its function is as follows. Involved in the biosynthesis of branched-chain amino acids (BCAA). Catalyzes an alkyl-migration followed by a ketol-acid reduction of (S)-2-acetolactate (S2AL) to yield (R)-2,3-dihydroxy-isovalerate. In the isomerase reaction, S2AL is rearranged via a Mg-dependent methyl migration to produce 3-hydroxy-3-methyl-2-ketobutyrate (HMKB). In the reductase reaction, this 2-ketoacid undergoes a metal-dependent reduction by NADPH to yield (R)-2,3-dihydroxy-isovalerate. The protein is Ketol-acid reductoisomerase (NADP(+)) of Pseudomonas aeruginosa (strain LESB58).